A 175-amino-acid polypeptide reads, in one-letter code: Cytochrome c-550-like protein (175 aa).

The N-terminal stretch at 1-34 is a signal peptide; the sequence is MYQPHFWQRSIGWLCGGLLILLLGWTIAPATALA. Residues C81, C84, H85, and C135 each coordinate heme c.

It belongs to the cytochrome c family. PsbV subfamily. Requires heme c as cofactor.

It localises to the cellular thylakoid membrane. Its function is as follows. Probable low-potential cytochrome c, can partially replace cytochrome c-550 (PsbV) function. The chain is Cytochrome c-550-like protein from Thermosynechococcus vestitus (strain NIES-2133 / IAM M-273 / BP-1).